The following is a 353-amino-acid chain: Mas-related G-protein coupled receptor member B5 (353 aa).

Topologically, residues 1–67 are extracellular; the sequence is MPDSPTESYG…SCIITFNTLN (67 aa). Asn-26 and Asn-44 each carry an N-linked (GlcNAc...) asparagine glycan. The helical transmembrane segment at 68–90 threads the bilayer; it reads FLTATISVVGTAGNATVLRLLGF. At 91-96 the chain is on the cytoplasmic side; the sequence is HMHRYA. A helical transmembrane segment spans residues 97–117; that stretch reads FSVYVFNLAGADFLYLCTQTV. Over 118 to 131 the chain is Extracellular; the sequence is YSLECVLQFDNSYF. A helical transmembrane segment spans residues 132-152; the sequence is YFLLTILMFAYLAALCMIPAI. Residues 153–180 are Cytoplasmic-facing; it reads STERCLSVTWPIWYHCQRPRHTSATVCA. A helical transmembrane segment spans residues 181–201; the sequence is LFWAFSLLLRLLLGQGCGFLF. The Extracellular segment spans residues 202 to 213; the sequence is GKYDYYFCRYCS. The helical transmembrane segment at 214-234 threads the bilayer; the sequence is FITTAFLIVLFVVPFVSSLAM. Over 235–253 the chain is Cytoplasmic; that stretch reads LTKIICGSHRIPVTRFYVT. The chain crosses the membrane as a helical span at residues 254-274; it reads IAVTVLVFTFFGLPVGIISLL. Topologically, residues 275–289 are extracellular; the sequence is LPRIVVFRGVFYIYK. A helical membrane pass occupies residues 290-310; sequence IVTFLYSVNCCANPIIYFLIG. The Cytoplasmic portion of the chain corresponds to 311–353; it reads SIRHHRLQRQSLKLLLQRAMQDTPEEEGGVKGPSQKSNELEIV. The disordered stretch occupies residues 333–353; the sequence is TPEEEGGVKGPSQKSNELEIV.

This sequence belongs to the G-protein coupled receptor 1 family. Mas subfamily. Expressed strongly in newborn dorsal root ganglia, adult dorsal root ganglia and trigeminal ganlia.

Its subcellular location is the membrane. In terms of biological role, orphan receptor. Probably involved in the function of nociceptive neurons. May regulate nociceptor function and/or development, including the sensation or modulation of pain. This is Mas-related G-protein coupled receptor member B5 (Mrgprb5) from Rattus norvegicus (Rat).